Here is a 354-residue protein sequence, read N- to C-terminus: Uroporphyrinogen decarboxylase (354 aa).

Residues 27–31, Asp77, Tyr154, Ser209, and His327 contribute to the substrate site; that span reads RQAGR.

Belongs to the uroporphyrinogen decarboxylase family. Homodimer.

It localises to the cytoplasm. It catalyses the reaction uroporphyrinogen III + 4 H(+) = coproporphyrinogen III + 4 CO2. The protein operates within porphyrin-containing compound metabolism; protoporphyrin-IX biosynthesis; coproporphyrinogen-III from 5-aminolevulinate: step 4/4. Its function is as follows. Catalyzes the decarboxylation of four acetate groups of uroporphyrinogen-III to yield coproporphyrinogen-III. In Shewanella loihica (strain ATCC BAA-1088 / PV-4), this protein is Uroporphyrinogen decarboxylase.